Reading from the N-terminus, the 312-residue chain is Large ribosomal subunit protein uL15m (312 aa).

Residues 63-89 (RIRKGRGPSSGYGKTAGRGTKGQKAHG) are disordered. The segment covering 70 to 82 (PSSGYGKTAGRGT) has biased composition (gly residues).

It belongs to the universal ribosomal protein uL15 family. In terms of assembly, component of the mitochondrial large ribosomal subunit (mt-LSU). Mature N.crassa 74S mitochondrial ribosomes consist of a small (37S) and a large (54S) subunit. The 37S small subunit contains a 16S ribosomal RNA (16S mt-rRNA) and 32 different proteins. The 54S large subunit contains a 23S rRNA (23S mt-rRNA) and 42 different proteins.

The protein localises to the mitochondrion. Functionally, component of the mitochondrial ribosome (mitoribosome), a dedicated translation machinery responsible for the synthesis of mitochondrial genome-encoded proteins, including at least some of the essential transmembrane subunits of the mitochondrial respiratory chain. The mitoribosomes are attached to the mitochondrial inner membrane and translation products are cotranslationally integrated into the membrane. This is Large ribosomal subunit protein uL15m (mrpl10) from Neurospora crassa (strain ATCC 24698 / 74-OR23-1A / CBS 708.71 / DSM 1257 / FGSC 987).